The sequence spans 188 residues: dCTP deaminase (188 aa).

Position 109-114 (K109–R114) interacts with dCTP. E135 acts as the Proton donor/acceptor in catalysis. DCTP-binding residues include Q154, Y168, and Q178.

Belongs to the dCTP deaminase family. Homotrimer.

It carries out the reaction dCTP + H2O + H(+) = dUTP + NH4(+). It functions in the pathway pyrimidine metabolism; dUMP biosynthesis; dUMP from dCTP (dUTP route): step 1/2. Its function is as follows. Catalyzes the deamination of dCTP to dUTP. The polypeptide is dCTP deaminase (Helicobacter pylori (strain P12)).